We begin with the raw amino-acid sequence, 265 residues long: Isoprenyl transferase (265 aa).

Asp35 is an active-site residue. Residue Asp35 coordinates Mg(2+). Substrate-binding positions include 36–39 (GNGR), Trp40, Arg48, His52, and 80–82 (STE). Asn83 acts as the Proton acceptor in catalysis. Residues Trp84, Arg86, Arg203, and 209 to 211 (RIS) contribute to the substrate site. A Mg(2+)-binding site is contributed by Glu222.

This sequence belongs to the UPP synthase family. In terms of assembly, homodimer. It depends on Mg(2+) as a cofactor.

Catalyzes the condensation of isopentenyl diphosphate (IPP) with allylic pyrophosphates generating different type of terpenoids. The protein is Isoprenyl transferase of Prochlorococcus marinus (strain MIT 9313).